The sequence spans 311 residues: ATP synthase gamma chain (311 aa).

The protein belongs to the ATPase gamma chain family. As to quaternary structure, F-type ATPases have 2 components, CF(1) - the catalytic core - and CF(0) - the membrane proton channel. CF(1) has five subunits: alpha(3), beta(3), gamma(1), delta(1), epsilon(1). CF(0) has three main subunits: a, b and c.

The protein localises to the cell membrane. Its function is as follows. Produces ATP from ADP in the presence of a proton gradient across the membrane. The gamma chain is believed to be important in regulating ATPase activity and the flow of protons through the CF(0) complex. This chain is ATP synthase gamma chain, found in Limosilactobacillus fermentum (strain NBRC 3956 / LMG 18251) (Lactobacillus fermentum).